Reading from the N-terminus, the 484-residue chain is MKFKQDFFTQLPEFYSQVYPQGITKPEWLAWSDDAAQLIGLSQPTDELLLGLSGNAAVDGATYYAQVYSGHQFGGYTPRLGDGRSIILGEAIGPNGAWDVALKGGGPTPYSRRGDGRAVMRSAVREFLVSEALHHLHVPTTRALAVIGSDLPVWRESQETAAITVRLARSHIRFGHFEFFCHSERGRADKLIQLLNFTITQHYPHLSCDAAGYKAWFLQVVQDTAKMIAHWQAVGFAHGVMNTDNMSILGDSFDFGPFAFLDTFQEDFICNHSDPEGRYAFGQQPGVGLWNLQRLAQALTPVIPSDDLIAILNQYQEALVQPYLRLMRAKLGLSAVDVPSVEQDKQDLDLIGRFTVLMEKNQLDYTQTWRQLGKLDPTSKHSALRDDFIDVSQFDTWYQAYQQRLGAVADIPAWQTERNSVNPKYILRNYLAQEAIIAVEEGNLAPLHLLQKILTQPFAEHAEHEDLAKRPPDWGQGLIMSCSS.

G81, G83, R84, K103, D115, G116, R166, and R173 together coordinate ATP. The Proton acceptor role is filled by D244. Positions 245 and 254 each coordinate Mg(2+). D254 is an ATP binding site.

Belongs to the SELO family. It depends on Mg(2+) as a cofactor. Mn(2+) is required as a cofactor.

It catalyses the reaction L-seryl-[protein] + ATP = 3-O-(5'-adenylyl)-L-seryl-[protein] + diphosphate. The enzyme catalyses L-threonyl-[protein] + ATP = 3-O-(5'-adenylyl)-L-threonyl-[protein] + diphosphate. The catalysed reaction is L-tyrosyl-[protein] + ATP = O-(5'-adenylyl)-L-tyrosyl-[protein] + diphosphate. It carries out the reaction L-histidyl-[protein] + UTP = N(tele)-(5'-uridylyl)-L-histidyl-[protein] + diphosphate. It catalyses the reaction L-seryl-[protein] + UTP = O-(5'-uridylyl)-L-seryl-[protein] + diphosphate. The enzyme catalyses L-tyrosyl-[protein] + UTP = O-(5'-uridylyl)-L-tyrosyl-[protein] + diphosphate. Functionally, nucleotidyltransferase involved in the post-translational modification of proteins. It can catalyze the addition of adenosine monophosphate (AMP) or uridine monophosphate (UMP) to a protein, resulting in modifications known as AMPylation and UMPylation. In Shewanella baltica (strain OS223), this protein is Protein nucleotidyltransferase YdiU.